The chain runs to 329 residues: Biotin synthase (329 aa).

Residues 38–262 enclose the Radical SAM core domain; sequence NTIQVSTLLS…IMPHSYIRLS (225 aa). [4Fe-4S] cluster-binding residues include Cys53, Cys57, and Cys60. 4 residues coordinate [2Fe-2S] cluster: Cys97, Cys128, Cys188, and Arg260.

It belongs to the radical SAM superfamily. Biotin synthase family. As to quaternary structure, homodimer. The cofactor is [4Fe-4S] cluster. [2Fe-2S] cluster is required as a cofactor.

It catalyses the reaction (4R,5S)-dethiobiotin + (sulfur carrier)-SH + 2 reduced [2Fe-2S]-[ferredoxin] + 2 S-adenosyl-L-methionine = (sulfur carrier)-H + biotin + 2 5'-deoxyadenosine + 2 L-methionine + 2 oxidized [2Fe-2S]-[ferredoxin]. It participates in cofactor biosynthesis; biotin biosynthesis; biotin from 7,8-diaminononanoate: step 2/2. Its function is as follows. Catalyzes the conversion of dethiobiotin (DTB) to biotin by the insertion of a sulfur atom into dethiobiotin via a radical-based mechanism. This chain is Biotin synthase, found in Acinetobacter calcoaceticus.